A 465-amino-acid chain; its full sequence is Cystathionine beta-lyase (465 aa).

Lys-213 carries the N6-(pyridoxal phosphate)lysine modification.

Belongs to the trans-sulfuration enzymes family. Pyridoxal 5'-phosphate serves as cofactor.

Its subcellular location is the cytoplasm. The protein localises to the nucleus. The enzyme catalyses L,L-cystathionine + H2O = L-homocysteine + pyruvate + NH4(+). It carries out the reaction an S-substituted L-cysteine + H2O = a thiol + pyruvate + NH4(+). It participates in amino-acid biosynthesis; L-methionine biosynthesis via de novo pathway; L-homocysteine from L-cystathionine: step 1/1. In Saccharomyces cerevisiae (strain ATCC 204508 / S288c) (Baker's yeast), this protein is Cystathionine beta-lyase (STR3).